Here is a 137-residue protein sequence, read N- to C-terminus: MSEALKILNNIRTLRAQARECTLETLEEMLEKLEVVVNERREEESAAAAEVEERTRKLQQYREMLIADGIDPNELLNSMAAAKSGTKAKRAARPAKYSYVDENGETKTWTGQGRTPAVIKKAMEEQGKQLEDFLIKE.

Positions 13–65 (TLRAQARECTLETLEEMLEKLEVVVNERREEESAAAAEVEERTRKLQQYREML) form a coiled coil. Residues 112–117 (QGRTPA) mediate DNA binding.

This sequence belongs to the histone-like protein H-NS family. Homodimer that oligomerizes on DNA into higher-order complexes that form bridges between disparate regions of DNA compacting it. Interacts with Hha, YdgT and StpA.

The protein resides in the cytoplasm. Its subcellular location is the nucleoid. A DNA-binding protein implicated in transcriptional repression and chromosome organization and compaction. Binds AT-rich DNA, repressing its transcription; about 754/4438 tested genes (15%) bind to H-NS, 70% of these are AT-rich and correspond to horizontally transferred geness (HTG), thus playing a central role in silencing foreign genes. This offers the selective advantage of silencing foreign DNA. Binds nucleation sites in AT-rich DNA and bridges them, forming higher-order nucleoprotein complexes and condensing the chromosome. A subset of genes are repressed by H-NS in association with Hha and/or YdgT. This is DNA-binding protein H-NS (hns) from Salmonella typhimurium (strain 14028s / SGSC 2262).